A 478-amino-acid chain; its full sequence is Nuclear distribution protein PAC1 (478 aa).

The LisH domain occupies 9 to 41; that stretch reads QAEELHKAMIAYLLSANLPKSAAALREELADSV. The stretch at 60-87 forms a coiled coil; that stretch reads TSVVRLQKKIMDLESRNNALQSELDSAT. 8 WD repeats span residues 113–154, 156–196, 200–247, 250–289, 292–352, 354–393, 398–439, and 440–477; these read SHRE…RTIK, HTKA…KNIR, GHDH…CVKT, GHVD…TKST, GHEH…IKTL, GHDN…KCVR, AHGH…GASA, and INGV…RVFA.

It belongs to the WD repeat LIS1/nudF family. As to quaternary structure, self-associates. Interacts with NDL1 and dynein.

It localises to the cytoplasm. The protein resides in the cytoskeleton. The protein localises to the spindle pole. Its function is as follows. Positively regulates the activity of the minus-end directed microtubule motor protein dynein. May enhance dynein-mediated microtubule sliding by targeting dynein to the microtubule plus end. Required for nuclear migration during vegetative growth as well as development. Required for retrograde early endosome (EE) transport from the hyphal tip. Required for localization of dynein to the mitotic spindle poles. Recruits additional proteins to the dynein complex at SPBs. This chain is Nuclear distribution protein PAC1, found in Paracoccidioides brasiliensis (strain Pb03).